A 439-amino-acid chain; its full sequence is Xaa-Pro dipeptidase (439 aa).

Mn(2+) contacts are provided by aspartate 244, aspartate 255, histidine 335, glutamate 380, and glutamate 419.

This sequence belongs to the peptidase M24B family. Bacterial-type prolidase subfamily. Requires Mn(2+) as cofactor.

It catalyses the reaction Xaa-L-Pro dipeptide + H2O = an L-alpha-amino acid + L-proline. Splits dipeptides with a prolyl residue in the C-terminal position. The polypeptide is Xaa-Pro dipeptidase (Shewanella sp. (strain MR-4)).